The primary structure comprises 301 residues: Probable 5-dehydro-4-deoxyglucarate dehydratase (301 aa).

This sequence belongs to the DapA family.

The catalysed reaction is 5-dehydro-4-deoxy-D-glucarate + H(+) = 2,5-dioxopentanoate + CO2 + H2O. It participates in carbohydrate acid metabolism; D-glucarate degradation; 2,5-dioxopentanoate from D-glucarate: step 2/2. The chain is Probable 5-dehydro-4-deoxyglucarate dehydratase from Chelativorans sp. (strain BNC1).